Consider the following 374-residue polypeptide: S-adenosylmethionine:tRNA ribosyltransferase-isomerase (374 aa).

The protein belongs to the QueA family. In terms of assembly, monomer.

The protein resides in the cytoplasm. The enzyme catalyses 7-aminomethyl-7-carbaguanosine(34) in tRNA + S-adenosyl-L-methionine = epoxyqueuosine(34) in tRNA + adenine + L-methionine + 2 H(+). It participates in tRNA modification; tRNA-queuosine biosynthesis. Its function is as follows. Transfers and isomerizes the ribose moiety from AdoMet to the 7-aminomethyl group of 7-deazaguanine (preQ1-tRNA) to give epoxyqueuosine (oQ-tRNA). This is S-adenosylmethionine:tRNA ribosyltransferase-isomerase from Prochlorococcus marinus (strain MIT 9215).